The following is a 63-amino-acid chain: 2-hydroxymuconate tautomerase (63 aa).

Residue Pro2 is the Proton acceptor; via imino nitrogen of the active site.

Belongs to the 4-oxalocrotonate tautomerase family. Homohexamer.

It catalyses the reaction (2Z,4E)-2-hydroxyhexa-2,4-dienedioate = (3E)-2-oxohex-3-enedioate. It functions in the pathway xenobiotic degradation; toluene degradation. The protein operates within xenobiotic degradation; xylene degradation. In terms of biological role, catalyzes the ketonization of 2-hydroxymuconate stereoselectively to yield 2-oxo-3-hexenedioate. The protein is 2-hydroxymuconate tautomerase (xylH) of Pseudomonas putida (Arthrobacter siderocapsulatus).